The primary structure comprises 121 residues: Mediator of RNA polymerase II transcription subunit 22 (121 aa).

Belongs to the Mediator complex subunit 22 family. Component of the Mediator complex.

It is found in the nucleus. Functionally, component of the Mediator complex, a coactivator involved in the regulated transcription of nearly all RNA polymerase II-dependent genes. Mediator functions as a bridge to convey information from gene-specific regulatory proteins to the basal RNA polymerase II transcription machinery. Mediator is recruited to promoters by direct interactions with regulatory proteins and serves as a scaffold for the assembly of a functional preinitiation complex with RNA polymerase II and the general transcription factors. The sequence is that of Mediator of RNA polymerase II transcription subunit 22 (SRB6) from Kluyveromyces lactis (strain ATCC 8585 / CBS 2359 / DSM 70799 / NBRC 1267 / NRRL Y-1140 / WM37) (Yeast).